We begin with the raw amino-acid sequence, 555 residues long: MAADMQRKRSSEGPDGTLAPSDGQSVERAESPTPGLAQGMEPGAGQEGAMFVHARSYEDLTESEDGAASGESPKEGAGGPPPLATDMRQISQDFSELSTQLTGVARDLQEEMLPGSSEDWPESPGAARRPATEPPRDGAGEGDEEEAAEAWRRHQKHVFVLSEAGKPVYSRYGSEEALSSTMGVMVALVSFLEADKNAIRSIHADGYKVVFVRRSPLVLVAVARTRQSAQELAQELLYIYYQILSLLTGAQLSHIFQQKQNYDLRRLLSGSERITDNLLQLMARDPSFLMGAARCLPLAAAVRDVVSASLQQARARSLVFSILLARNQLVALVRRKDQFLHPIDLHLLFNLISSSSSFREGEAWTPVCLPKFNAAGFFHAHISYLEPDTDLCLLLVSTDREDFFAVSDCRRRFQERLRKRGAHLALREALRTPYYSVAQVGVPDLRHFLYKSKSSGLFTSPEIEAPYDSEEEQERLLGLYQYLHSRAHNASRPLKTIYYTGPNENLLAWVTGAFELYMCYSPLGTKASAVSAIHKLMRWIRKEEDRLFILTPLTY.

A compositionally biased stretch (basic and acidic residues) spans 1 to 12 (MAADMQRKRSSE). The disordered stretch occupies residues 1-90 (MAADMQRKRS…PPLATDMRQI (90 aa)). S31 and S56 each carry phosphoserine. T61 is modified (phosphothreonine). Position 91 is a phosphoserine (S91). A disordered region spans residues 112–149 (MLPGSSEDWPESPGAARRPATEPPRDGAGEGDEEEAAE). A compositionally biased stretch (basic and acidic residues) spans 130–139 (PATEPPRDGA).

The protein belongs to the MON1/SAND family. As to quaternary structure, interacts with CCZ1. Found in a complex with RMC1, CCZ1, MON1A and MON1B. The MON1A-CCZ1B complex interacts with RIMOC1. The MON1A-CCZ1B complex interacts with RAB7A and this interaction is enhanced in the presence of RIMOC1.

Functionally, plays an important role in membrane trafficking through the secretory apparatus. Not involved in endocytic trafficking to lysosomes. Acts in concert with CCZ1, as a guanine exchange factor (GEF) for RAB7, promotes the exchange of GDP to GTP, converting it from an inactive GDP-bound form into an active GTP-bound form. This Bos taurus (Bovine) protein is Vacuolar fusion protein MON1 homolog A (MON1A).